The chain runs to 72 residues: Translation initiation factor IF-1 (72 aa).

In terms of domain architecture, S1-like spans 1–72 (MSKDDSIEFE…TKGRITYRMK (72 aa)).

It belongs to the IF-1 family. In terms of assembly, component of the 30S ribosomal translation pre-initiation complex which assembles on the 30S ribosome in the order IF-2 and IF-3, IF-1 and N-formylmethionyl-tRNA(fMet); mRNA recruitment can occur at any time during PIC assembly.

The protein localises to the cytoplasm. In terms of biological role, one of the essential components for the initiation of protein synthesis. Stabilizes the binding of IF-2 and IF-3 on the 30S subunit to which N-formylmethionyl-tRNA(fMet) subsequently binds. Helps modulate mRNA selection, yielding the 30S pre-initiation complex (PIC). Upon addition of the 50S ribosomal subunit IF-1, IF-2 and IF-3 are released leaving the mature 70S translation initiation complex. The chain is Translation initiation factor IF-1 from Xanthomonas campestris pv. campestris (strain 8004).